Here is a 511-residue protein sequence, read N- to C-terminus: MEKFEGYSKKHKFRHQYFVYPLLFQEYIYAFAHDYGLKGSESVEIISCNNKKFSSLLVKRLIIRMYQQNFWINSVNHPNQDRLLDYNNYFYSEFYSQILSEGFAIVVEIPFSLRELSCSKEKEIPKFQNLRSIHSIFPFLEDKFLHLDYLSHIEIPYPIHLEILVQLLQYRLQDVPSLHFLRFFLNYYSNWNSLITSMKSIFLLKKENKRLFRFLYNSYVSEYEFFLLFLRKQSSRLPLTSSGTFLERIHFCTKMEHFGVRYPGFFRKTIWFFMDPLMHYVRYQGKAILASKGARFLRKKWKCYLVNFWQYSFSFWIQPRRIQLNKLANSCFDFLGYLSSVPQSPLLVRNQMLENSFLITTRIKKFDTIAPAISLIGSLSKAQFCTGSGHPISKPIWTDLSDWDILDRFGRICRNLFHYHSGSSKKQTLYRVKYILRLSCARTLARKHKSTVRTFMQRLGSVFLEEFFTEEEQVFSLMFTKTTHFSFRGSHSERIWYFDILRINDLVKPFN.

The protein belongs to the intron maturase 2 family. MatK subfamily.

Its subcellular location is the plastid. It localises to the chloroplast. Its function is as follows. Usually encoded in the trnK tRNA gene intron. Probably assists in splicing its own and other chloroplast group II introns. This is Maturase K from Nardus stricta (Mat-grass).